The chain runs to 828 residues: MPSALAIFTCRPNSHPFQERHVYLDEPIKIGRSVARCRPAQNNATFDCKVLSRNHALVWFDHKTGKFYLQDTKSSNGTFINSQRLSRGSEESPPCEILSGDIIQFGVDVTENTRKVTHGCIVSTIKLFLPDGMEARLRSDVIHAPLPSPVDKVAANTPSMYSQELFQLSQYLQEALHREQMLEQKLATLQRLLAITQEASDTSWQALIDEDRLLSRLEVMGNQLQACSKNQTEDSLRKELIALQEDKHNYETTAKESLRRVLQEKIEVVRKLSEVERSLSNTEDECTHLKEMNERTQEELRELANKYNGAVNEIKDLSDKLKVAEGKQEEIQQKGQAEKKELQHKIDEMEEKEQELQAKIEALQADNDFTNERLTALQVRLEHLQEKTLKECSSLEHLLSKSGGDCTFIHQFIECQKKLIVEGHLTKAVEETKLSKENQTRAKESDFSDTLSPSKEKSSDDTTDAQMDEQDLNEPLAKVSLLKDDLQGAQSEIEAKQEIQHLRKELIEAQELARTSKQKCFELQALLEEERKAYRNQVEESTKQIQVLQAQLQRLHIDTENLREEKDSEITSTRDELLSARDEILLLHQAAAKVASERDTDIASLQEELKKVRAELERWRKAASEYEKEITSLQNSFQLRCQQCEDQQREEATRLQGELEKLRKEWNALETECHSLKRENVLLSSELQRQEKELHNSQKQSLELTSDLSILQMSRKELENQVGSLKEQHLRDSADLKTLLSKAENQAKDVQKEYEKTQTVLSELKLKFEMTEQEKQSITDELKQCKNNLKLLREKGNNKPWPWMPMLAALVAVTAIVLYVPGLARASP.

Residues 1–163 (MPSALAIFTC…AANTPSMYSQ (163 aa)) are necessary for targeting to centrosomes. Residues 1–802 (MPSALAIFTC…REKGNNKPWP (802 aa)) are Cytoplasmic-facing. The region spanning 28–85 (IKIGRSVARCRPAQNNATFDCKVLSRNHALVWFDHKTGKFYLQDTKSSNGTFINSQRL) is the FHA domain. A Phosphoserine modification is found at S148. 2 coiled-coil regions span residues 167–202 (QLSQYLQEALHREQMLEQKLATLQRLLAITQEASDT) and 230–388 (NQTE…QEKT). Residues 339 to 359 (KKELQHKIDEMEEKEQELQAK) traverse the membrane as a helical; Anchor for type IV membrane protein segment. Basic and acidic residues predominate over residues 433–446 (KLSKENQTRAKESD). The segment at 433 to 467 (KLSKENQTRAKESDFSDTLSPSKEKSSDDTTDAQM) is disordered. Phosphoserine occurs at positions 448 and 452. The stretch at 477–799 (AKVSLLKDDL…KLLREKGNNK (323 aa)) forms a coiled coil. Residues 803–823 (WMPMLAALVAVTAIVLYVPGL) form a helical; Anchor for type IV membrane protein membrane-spanning segment. Residues 824-828 (ARASP) are Extracellular-facing.

This sequence belongs to the SLMAP family. As to quaternary structure, homodimer. Interacts with myosin. Interacts with SIKE1 and both associate with the STRIPAK core complex composed of PP2A catalytic and scaffolding subunits, the striatins (PP2A regulatory subunits), the striatin-associated proteins MOB4, STRIP1 and STRIP2, PDCD10 and members of the STE20 kinases, such as STK24 and STK26. Interacts (via FHA domain) with STK3 (when phosphorylated); the interaction associates STK3 with the STRIPAK complex.

Its subcellular location is the cell membrane. The protein resides in the sarcolemma. It localises to the cytoplasm. The protein localises to the myofibril. It is found in the sarcomere. Its subcellular location is the m line. The protein resides in the z line. It localises to the cytoskeleton. The protein localises to the microtubule organizing center. It is found in the centrosome. Its subcellular location is the endoplasmic reticulum membrane. The protein resides in the mitochondrion membrane. In terms of biological role, associates with the striatin-interacting phosphatase and kinase (STRIPAK) core complex, forming the extended (SIKE1:SLMAP)STRIPAK complex. The (SIKE1:SLMAP)STRIPAK complex dephosphorylates STK3 leading to the inhibition of Hippo signaling and the control of cell growth. May play a role during myoblast fusion. This Homo sapiens (Human) protein is Sarcolemmal membrane-associated protein.